The primary structure comprises 305 residues: GMP synthase [glutamine-hydrolyzing] subunit B (305 aa).

The region spanning 2-184 (VKPEKFIPKA…LQLPEEICER (183 aa)) is the GMPS ATP-PPase domain. 29–35 (SGGVDSS) lines the ATP pocket.

As to quaternary structure, heterodimer composed of a glutamine amidotransferase subunit (A) and a GMP-binding subunit (B).

It carries out the reaction XMP + L-glutamine + ATP + H2O = GMP + L-glutamate + AMP + diphosphate + 2 H(+). It functions in the pathway purine metabolism; GMP biosynthesis; GMP from XMP (L-Gln route): step 1/1. Its function is as follows. Catalyzes the synthesis of GMP from XMP. The sequence is that of GMP synthase [glutamine-hydrolyzing] subunit B (guaAB) from Methanosarcina acetivorans (strain ATCC 35395 / DSM 2834 / JCM 12185 / C2A).